Consider the following 445-residue polypeptide: Histidinol dehydrogenase (445 aa).

Positions 138, 199, and 222 each coordinate NAD(+). Substrate contacts are provided by serine 245, glutamine 267, and histidine 270. The Zn(2+) site is built by glutamine 267 and histidine 270. Catalysis depends on proton acceptor residues glutamate 335 and histidine 336. Substrate is bound by residues histidine 336, aspartate 369, glutamate 423, and histidine 428. Aspartate 369 is a binding site for Zn(2+). Histidine 428 contacts Zn(2+).

Belongs to the histidinol dehydrogenase family. The cofactor is Zn(2+).

The catalysed reaction is L-histidinol + 2 NAD(+) + H2O = L-histidine + 2 NADH + 3 H(+). Its pathway is amino-acid biosynthesis; L-histidine biosynthesis; L-histidine from 5-phospho-alpha-D-ribose 1-diphosphate: step 9/9. Functionally, catalyzes the sequential NAD-dependent oxidations of L-histidinol to L-histidinaldehyde and then to L-histidine. This Burkholderia pseudomallei (strain 1710b) protein is Histidinol dehydrogenase.